We begin with the raw amino-acid sequence, 87 residues long: MPEQDEVITLIDEDGAEHDFNVIDVIEVEGSEYAILLPVEDESDEAVILKFAKDEDDNEILVDIESDEEWEKVADAWEEMVTAEEGE.

The protein belongs to the UPF0473 family.

The sequence is that of UPF0473 protein Dred_0776 from Desulforamulus reducens (strain ATCC BAA-1160 / DSM 100696 / MI-1) (Desulfotomaculum reducens).